A 137-amino-acid chain; its full sequence is Small ribosomal subunit protein uS12 (137 aa).

The segment covering 31-41 has biased composition (polar residues); it reads MSRKQTNNTAP. The disordered stretch occupies residues 31-57; the sequence is MSRKQTNNTAPQKRGVATRVGTMTPKK. 3-methylthioaspartic acid is present on aspartate 102.

Belongs to the universal ribosomal protein uS12 family. As to quaternary structure, part of the 30S ribosomal subunit. Contacts proteins S8 and S17. May interact with IF1 in the 30S initiation complex.

Its function is as follows. With S4 and S5 plays an important role in translational accuracy. Functionally, interacts with and stabilizes bases of the 16S rRNA that are involved in tRNA selection in the A site and with the mRNA backbone. Located at the interface of the 30S and 50S subunits, it traverses the body of the 30S subunit contacting proteins on the other side and probably holding the rRNA structure together. The combined cluster of proteins S8, S12 and S17 appears to hold together the shoulder and platform of the 30S subunit. This is Small ribosomal subunit protein uS12 from Oenococcus oeni (strain ATCC BAA-331 / PSU-1).